Here is a 452-residue protein sequence, read N- to C-terminus: Flavin-containing monooxygenase FMO GS-OX-like 4 (452 aa).

FAD is bound at residue 17-22 (GAGAAG). 217–222 (GNSASA) contacts NADP(+).

It belongs to the FMO family. It depends on FAD as a cofactor.

In terms of biological role, catalyzes the conversion of methylthioalkyl glucosinolates of any chain length into methylsulfinylalkyl glucosinolates. This is Flavin-containing monooxygenase FMO GS-OX-like 4 from Arabidopsis thaliana (Mouse-ear cress).